The sequence spans 91 residues: Acylphosphatase (91 aa).

The Acylphosphatase-like domain occupies 6–91 (CMRCYISGRV…WKDYISFDVL (86 aa)). Active-site residues include arginine 21 and asparagine 39.

Belongs to the acylphosphatase family.

It carries out the reaction an acyl phosphate + H2O = a carboxylate + phosphate + H(+). The chain is Acylphosphatase (acyP) from Legionella pneumophila (strain Paris).